A 529-amino-acid chain; its full sequence is Tyrosinase (529 aa).

The N-terminal stretch at 1–18 (MLLAVLYCLLWSFQTSAG) is a signal peptide. Residues 19-476 (HFPRACVSSK…YLEQASRIWS (458 aa)) are Lumenal, melanosome-facing. 3 N-linked (GlcNAc...) asparagine glycosylation sites follow: Asn-86, Asn-111, and Asn-161. Positions 180, 202, and 211 each coordinate Cu cation. Asn-230 is a glycosylation site (N-linked (GlcNAc...) asparagine). The tract at residues 287-313 (SLCNGTPEGPLQRNPGNHDKSRTPRLP) is disordered. N-linked (GlcNAc...) asparagine glycosylation is present at Asn-337. Residues His-363 and His-367 each contribute to the Cu cation site. N-linked (GlcNAc...) asparagine glycosylation occurs at Asn-371. His-390 provides a ligand contact to Cu cation. The chain crosses the membrane as a helical span at residues 477–497 (WLLGAAMVGAVLTALLAGLVS). The Cytoplasmic portion of the chain corresponds to 498-529 (LLCRHKRKQLPEEKQPLLMEKEDYHSLYQSHL).

It belongs to the tyrosinase family. In terms of assembly, forms an OPN3-dependent complex with DCT in response to blue light in melanocytes. The cofactor is Cu(2+). In terms of processing, glycosylated.

Its subcellular location is the melanosome membrane. The protein resides in the melanosome. It carries out the reaction 2 L-dopa + O2 = 2 L-dopaquinone + 2 H2O. It catalyses the reaction L-tyrosine + O2 = L-dopaquinone + H2O. The catalysed reaction is 2 5,6-dihydroxyindole-2-carboxylate + O2 = 2 indole-5,6-quinone-2-carboxylate + 2 H2O. Functionally, this is a copper-containing oxidase that functions in the formation of pigments such as melanins and other polyphenolic compounds. Catalyzes the initial and rate limiting step in the cascade of reactions leading to melanin production from tyrosine. In addition to hydroxylating tyrosine to DOPA (3,4-dihydroxyphenylalanine), also catalyzes the oxidation of DOPA to DOPA-quinone, and possibly the oxidation of DHI (5,6-dihydroxyindole) to indole-5,6 quinone. The protein is Tyrosinase (TYR) of Gorilla gorilla gorilla (Western lowland gorilla).